The sequence spans 500 residues: L-arabinose isomerase (500 aa).

Mn(2+) contacts are provided by glutamate 306, glutamate 333, histidine 349, and histidine 448.

It belongs to the arabinose isomerase family. Mn(2+) is required as a cofactor.

The enzyme catalyses beta-L-arabinopyranose = L-ribulose. It functions in the pathway carbohydrate degradation; L-arabinose degradation via L-ribulose; D-xylulose 5-phosphate from L-arabinose (bacterial route): step 1/3. Catalyzes the conversion of L-arabinose to L-ribulose. This Cellvibrio japonicus (strain Ueda107) (Pseudomonas fluorescens subsp. cellulosa) protein is L-arabinose isomerase.